A 71-amino-acid chain; its full sequence is Ranatuerin-2Va (71 aa).

The first 22 residues, 1–22 (MFTLKKSFLLLFFLGTITLSLC), serve as a signal peptide directing secretion. The propeptide occupies 23–43 (EQERGADEDDGVEMTEEEVKR). A disulfide bond links Cys66 and Cys71.

In terms of tissue distribution, expressed by the skin glands.

Its subcellular location is the secreted. Antimicrobial peptide. The polypeptide is Ranatuerin-2Va (Odorrana versabilis (Chinese bamboo leaf odorous frog)).